Here is a 275-residue protein sequence, read N- to C-terminus: MAIVKVKPTSPGRRAMVKVVNKDLHKGKPHAALLDTQNSKAGRNNNGRITTRHQGGGHKHHYRVIDFRRTKDGIPAKVERLEYDPNRSANIALVLYADGERRYIIAPKGVTVGQQLMSGSEAPIRAGNTLPIRNIPVGTTIHCIEMLPGKGAQMARSAGTSAMLLAREGVYAQVRLRSGEIRRVHIECRATIGEVGNEEHSLRQIGKAGANRWRGIRPTVRGVAMNPIDHPHGGGEGRTAAGRDPVSPWGTPTKGFRTRRNKRTTTMIVQRRHKR.

Over residues 38–53 (NSKAGRNNNGRITTRH) the composition is skewed to polar residues. 2 disordered regions span residues 38-59 (NSKA…GGHK) and 224-257 (AMNP…KGFR).

The protein belongs to the universal ribosomal protein uL2 family. Part of the 50S ribosomal subunit. Forms a bridge to the 30S subunit in the 70S ribosome.

In terms of biological role, one of the primary rRNA binding proteins. Required for association of the 30S and 50S subunits to form the 70S ribosome, for tRNA binding and peptide bond formation. It has been suggested to have peptidyltransferase activity; this is somewhat controversial. Makes several contacts with the 16S rRNA in the 70S ribosome. This is Large ribosomal subunit protein uL2 from Burkholderia thailandensis (strain ATCC 700388 / DSM 13276 / CCUG 48851 / CIP 106301 / E264).